The primary structure comprises 437 residues: MSEEQDPLLAGLGETSGDNHTQQSHEQQPEQPQETEEHHEEEPSRVDPEQEAHNKALNQFKRKLLEHRRYDDQLKQRRQNIRDLEKLYDKTENDIKALQSIGQLIGEVMKELSEEKYIVKASSGPRYIVGVRNSVDRSKLKKGVRVTLDITTLTIMRILPRETDPLVYNMTSFEQGEITFDGIGGLTEQIRELREVIELPLKNPEIFQRVGIKPPKGVLLYGPPGTGKTLLAKAVAATIGANFIFSPASGIVDKYIGESARIIREMFAYAKEHEPCIIFMDEVDAIGGRRFSEGTSADREIQRTLMELLTQMDGFDNLGQTKIIMATNRPDTLDPALLRPGRLDRKVEIPLPNEAGRLEIFKIHTAKVKKTGEFDFEAAVKMSDGFNGADIRNCATEAGFFAIRDDRDHINPDDLMKAVRKVAEVKKLEGTIEYQKL.

A disordered region spans residues 1 to 51 (MSEEQDPLLAGLGETSGDNHTQQSHEQQPEQPQETEEHHEEEPSRVDPEQE). An N-acetylserine modification is found at S2. The span at 20–32 (HTQQSHEQQPEQP) shows a compositional bias: low complexity. Basic and acidic residues predominate over residues 35 to 51 (TEEHHEEEPSRVDPEQE). Residue 222–229 (GPPGTGKT) coordinates ATP.

Belongs to the AAA ATPase family. N-acetylated by NAT1.

The 26S proteasome is involved in the ATP-dependent degradation of ubiquitinated proteins. The regulatory (or ATPase) complex confers ATP dependency and substrate specificity to the 26S complex. The sequence is that of 26S proteasome subunit RPT4 (RPT4) from Saccharomyces cerevisiae (strain ATCC 204508 / S288c) (Baker's yeast).